The chain runs to 945 residues: Protein translocase subunit SecA (945 aa).

ATP is bound by residues glutamine 90, 108–112, and aspartate 509; that span reads GEGKT. A disordered region spans residues 533–568; that stretch reads VKPEDGHKPPVPLQRRSESSGFGEDKDVTTDNSKPL. Residues 547–561 show a composition bias toward basic and acidic residues; it reads RRSESSGFGEDKDVT.

This sequence belongs to the SecA family. As to quaternary structure, monomer and homodimer. Part of the essential Sec protein translocation apparatus which comprises SecA, SecYEG and auxiliary proteins SecDF. Other proteins may also be involved.

The protein localises to the cell inner membrane. It localises to the cellular thylakoid membrane. Its subcellular location is the cytoplasm. It catalyses the reaction ATP + H2O + cellular proteinSide 1 = ADP + phosphate + cellular proteinSide 2.. Functionally, part of the Sec protein translocase complex. Interacts with the SecYEG preprotein conducting channel. Has a central role in coupling the hydrolysis of ATP to the transfer of proteins into and across the cell membrane, serving as an ATP-driven molecular motor driving the stepwise translocation of polypeptide chains across the membrane. Probably participates in protein translocation into and across both the cytoplasmic and thylakoid membranes in cyanobacterial cells. The protein is Protein translocase subunit SecA of Prochlorococcus marinus (strain MIT 9211).